Here is a 355-residue protein sequence, read N- to C-terminus: Gibberellin 3-beta-dioxygenase 4 (355 aa).

In terms of domain architecture, Fe2OG dioxygenase spans glycine 203 to glycine 303. 3 residues coordinate Fe cation: histidine 227, aspartate 229, and histidine 284. The active site involves arginine 294.

The protein belongs to the iron/ascorbate-dependent oxidoreductase family. GA3OX subfamily. L-ascorbate serves as cofactor. Requires Fe cation as cofactor. In terms of tissue distribution, expressed in siliques and in seeds, specifically at the rim of the embryo and the outer integument. Also expressed in flowers. Not detected in roots, stems and leaves.

The enzyme catalyses gibberellin A20 + 2-oxoglutarate + O2 = gibberellin A1 + succinate + CO2. It participates in plant hormone biosynthesis; gibberellin biosynthesis. In terms of biological role, converts the inactive gibberellin (GA) precursors GA9 and GA20 in the bioactives gibberellins GA4 and GA1. Involved in the production of bioactive GA for reproductive development. This Arabidopsis thaliana (Mouse-ear cress) protein is Gibberellin 3-beta-dioxygenase 4.